We begin with the raw amino-acid sequence, 238 residues long: B-box zinc finger protein 25 (238 aa).

8 residues coordinate Zn(2+): cysteine 5, cysteine 8, cysteine 28, histidine 33, cysteine 57, cysteine 60, cysteine 80, and histidine 85. The B box-type 1; atypical zinc-finger motif lies at 5–47 (CDVCEKAPATLICCADEAALCAKCDVEVHAANKLASKHQRLFL). The B box-type 2; atypical zinc-finger motif lies at 57–99 (CDICLEKAAFIFCVEDRALLCRDCDEATHAPNTRSANHQRFLA). Residues 115–139 (VEKNHFDPSNQQSLSKPPTQQPAAP) are disordered. The segment covering 121 to 137 (DPSNQQSLSKPPTQQPA) has biased composition (polar residues). An interaction with COP1 region spans residues 226-238 (DDEEEHFLVPDLG).

In terms of assembly, interacts with COP1 WD40 domain. Interacts with HY5 and HYH. Post-translationally, COP1-mediated ubiquitination and subsequent proteasomal degradation of BBX25/STH occurs in the dark.

The protein localises to the nucleus. Acts as a negative regulator of seedling photomorphogenesis. BBX25/STH and BBX24/STO function as transcriptional corepressors of HY5 activity, leading to the down-regulation of BBX22 expression. BBX25/STH acts additively with BBX24/STO during de-etiolation and the hypocotyl shade avoidance response. This Arabidopsis thaliana (Mouse-ear cress) protein is B-box zinc finger protein 25.